Here is a 392-residue protein sequence, read N- to C-terminus: S-adenosylmethionine synthase (392 aa).

H20 is an ATP binding site. Position 22 (D22) interacts with Mg(2+). Residue E48 participates in K(+) binding. 2 residues coordinate L-methionine: E61 and Q106. The tract at residues 106 to 116 (QSRDIINAIEK) is flexible loop. ATP is bound by residues 171–173 (DSK), D248, 254–255 (RK), A271, and K275. D248 contributes to the L-methionine binding site. K279 serves as a coordination point for L-methionine.

It belongs to the AdoMet synthase family. In terms of assembly, homotetramer; dimer of dimers. Requires Mg(2+) as cofactor. The cofactor is K(+).

The protein localises to the cytoplasm. The enzyme catalyses L-methionine + ATP + H2O = S-adenosyl-L-methionine + phosphate + diphosphate. It participates in amino-acid biosynthesis; S-adenosyl-L-methionine biosynthesis; S-adenosyl-L-methionine from L-methionine: step 1/1. Functionally, catalyzes the formation of S-adenosylmethionine (AdoMet) from methionine and ATP. The overall synthetic reaction is composed of two sequential steps, AdoMet formation and the subsequent tripolyphosphate hydrolysis which occurs prior to release of AdoMet from the enzyme. The polypeptide is S-adenosylmethionine synthase (Borreliella afzelii (strain PKo) (Borrelia afzelii)).